The sequence spans 227 residues: 7-cyano-7-deazaguanine synthase (227 aa).

An ATP-binding site is contributed by 9–19; it reads LSGGLDSATVL. Residues Cys189, Cys199, Cys202, and Cys205 each coordinate Zn(2+).

Belongs to the QueC family. Zn(2+) is required as a cofactor.

It catalyses the reaction 7-carboxy-7-deazaguanine + NH4(+) + ATP = 7-cyano-7-deazaguanine + ADP + phosphate + H2O + H(+). Its pathway is purine metabolism; 7-cyano-7-deazaguanine biosynthesis. Its function is as follows. Catalyzes the ATP-dependent conversion of 7-carboxy-7-deazaguanine (CDG) to 7-cyano-7-deazaguanine (preQ(0)). This is 7-cyano-7-deazaguanine synthase from Cupriavidus metallidurans (strain ATCC 43123 / DSM 2839 / NBRC 102507 / CH34) (Ralstonia metallidurans).